The following is a 205-amino-acid chain: Outer-membrane lipoprotein LolB (205 aa).

Residues 1-17 (MFLRHCITFTMIALLAG) form the signal peptide. C18 carries N-palmitoyl cysteine lipidation. A lipid anchor (S-diacylglycerol cysteine) is attached at C18.

This sequence belongs to the LolB family. Monomer.

The protein localises to the cell outer membrane. Its function is as follows. Plays a critical role in the incorporation of lipoproteins in the outer membrane after they are released by the LolA protein. The protein is Outer-membrane lipoprotein LolB of Pseudomonas putida (strain ATCC 700007 / DSM 6899 / JCM 31910 / BCRC 17059 / LMG 24140 / F1).